Consider the following 377-residue polypeptide: tRNA-specific 2-thiouridylase MnmA (377 aa).

ATP is bound by residues 8 to 15 (GMSGGVDS) and methionine 34. The tract at residues 94–96 (NPD) is interaction with target base in tRNA. The active-site Nucleophile is the cysteine 99. An intrachain disulfide couples cysteine 99 to cysteine 201. Residue glycine 123 coordinates ATP. Positions 151 to 153 (KDQ) are interaction with tRNA. The active-site Cysteine persulfide intermediate is cysteine 201. The interval 315–316 (RY) is interaction with tRNA.

This sequence belongs to the MnmA/TRMU family.

The protein localises to the cytoplasm. It carries out the reaction S-sulfanyl-L-cysteinyl-[protein] + uridine(34) in tRNA + AH2 + ATP = 2-thiouridine(34) in tRNA + L-cysteinyl-[protein] + A + AMP + diphosphate + H(+). Functionally, catalyzes the 2-thiolation of uridine at the wobble position (U34) of tRNA, leading to the formation of s(2)U34. In Acinetobacter baumannii (strain ACICU), this protein is tRNA-specific 2-thiouridylase MnmA.